The following is a 450-amino-acid chain: D-inositol 3-phosphate glycosyltransferase (450 aa).

Histidine 26 contacts 1D-myo-inositol 3-phosphate. UDP-N-acetyl-alpha-D-glucosamine contacts are provided by residues 32 to 33 (QP) and glycine 40. Residues 37–42 (DAGGMN), lysine 95, tyrosine 128, threonine 152, and arginine 172 each bind 1D-myo-inositol 3-phosphate. 3 residues coordinate UDP-N-acetyl-alpha-D-glucosamine: arginine 246, lysine 251, and glutamine 313. Residues tyrosine 322, arginine 323, and alanine 325 each coordinate Mg(2+). Positions 335 and 343 each coordinate UDP-N-acetyl-alpha-D-glucosamine. Residue threonine 349 coordinates Mg(2+).

The protein belongs to the glycosyltransferase group 1 family. MshA subfamily. In terms of assembly, homodimer.

It carries out the reaction 1D-myo-inositol 3-phosphate + UDP-N-acetyl-alpha-D-glucosamine = 1D-myo-inositol 2-acetamido-2-deoxy-alpha-D-glucopyranoside 3-phosphate + UDP + H(+). Functionally, catalyzes the transfer of a N-acetyl-glucosamine moiety to 1D-myo-inositol 3-phosphate to produce 1D-myo-inositol 2-acetamido-2-deoxy-glucopyranoside 3-phosphate in the mycothiol biosynthesis pathway. This chain is D-inositol 3-phosphate glycosyltransferase, found in Mycolicibacterium vanbaalenii (strain DSM 7251 / JCM 13017 / BCRC 16820 / KCTC 9966 / NRRL B-24157 / PYR-1) (Mycobacterium vanbaalenii).